A 488-amino-acid chain; its full sequence is UDP-N-acetylmuramate--L-alanine ligase (488 aa).

An ATP-binding site is contributed by 129–135; that stretch reads GTHGKTT.

The protein belongs to the MurCDEF family.

Its subcellular location is the cytoplasm. The catalysed reaction is UDP-N-acetyl-alpha-D-muramate + L-alanine + ATP = UDP-N-acetyl-alpha-D-muramoyl-L-alanine + ADP + phosphate + H(+). It functions in the pathway cell wall biogenesis; peptidoglycan biosynthesis. Functionally, cell wall formation. The sequence is that of UDP-N-acetylmuramate--L-alanine ligase from Chromohalobacter salexigens (strain ATCC BAA-138 / DSM 3043 / CIP 106854 / NCIMB 13768 / 1H11).